We begin with the raw amino-acid sequence, 322 residues long: Lipoyl synthase (322 aa).

Residues 1–12 are compositionally biased toward polar residues; that stretch reads MVTVLNTVNQSG. A disordered region spans residues 1–22; sequence MVTVLNTVNQSGRLRHPEKAHR. Residues Cys-60, Cys-65, Cys-71, Cys-86, Cys-90, Cys-93, and Ser-299 each contribute to the [4Fe-4S] cluster site. The Radical SAM core domain occupies 72–288; that stretch reads WEKKHATFMI…ETIGKTKGFL (217 aa).

This sequence belongs to the radical SAM superfamily. Lipoyl synthase family. [4Fe-4S] cluster is required as a cofactor.

The protein localises to the cytoplasm. It carries out the reaction [[Fe-S] cluster scaffold protein carrying a second [4Fe-4S](2+) cluster] + N(6)-octanoyl-L-lysyl-[protein] + 2 oxidized [2Fe-2S]-[ferredoxin] + 2 S-adenosyl-L-methionine + 4 H(+) = [[Fe-S] cluster scaffold protein] + N(6)-[(R)-dihydrolipoyl]-L-lysyl-[protein] + 4 Fe(3+) + 2 hydrogen sulfide + 2 5'-deoxyadenosine + 2 L-methionine + 2 reduced [2Fe-2S]-[ferredoxin]. It participates in protein modification; protein lipoylation via endogenous pathway; protein N(6)-(lipoyl)lysine from octanoyl-[acyl-carrier-protein]: step 2/2. Functionally, catalyzes the radical-mediated insertion of two sulfur atoms into the C-6 and C-8 positions of the octanoyl moiety bound to the lipoyl domains of lipoate-dependent enzymes, thereby converting the octanoylated domains into lipoylated derivatives. The sequence is that of Lipoyl synthase from Brucella abortus (strain S19).